Here is a 114-residue protein sequence, read N- to C-terminus: MTANAPPPEAFQFTAINLPFVFSKLESHALLVTLSFSYCSSFLAAWPKTCLYLEARTNFPLILRPSKWSVSFIPFSLYSFDIRVHESTLFSSRVKIISPKFYLRSKVKNHAQRH.

This is an uncharacterized protein from Saccharomyces cerevisiae (strain ATCC 204508 / S288c) (Baker's yeast).